A 376-amino-acid chain; its full sequence is Thymidine kinase (376 aa).

The tract at residues 1 to 44 (MASYPGHQHASAFDQAARSRGHSNRRTALRPRRQQEATEVRPEQ) is disordered. The span at 19–32 (SRGHSNRRTALRPR) shows a compositional bias: basic residues. The segment covering 33 to 44 (RQQEATEVRPEQ) has biased composition (basic and acidic residues). ATP is bound at residue 56–63 (GPHGMGKT). Residue E83 is the Proton acceptor of the active site. Y101 and Q125 together coordinate substrate. ATP is bound at residue R216. R222 is a binding site for substrate. The disordered stretch occupies residues 260 to 280 (GQLSGTAVPPQGAEPQSNAGP).

It belongs to the herpesviridae thymidine kinase family. In terms of assembly, homodimer.

It carries out the reaction thymidine + ATP = dTMP + ADP + H(+). In terms of biological role, catalyzes the transfer of the gamma-phospho group of ATP to thymidine to generate dTMP in the salvage pathway of pyrimidine synthesis. The dTMP serves as a substrate for DNA polymerase during viral DNA replication. Allows the virus to be reactivated and to grow in non-proliferative cells lacking a high concentration of phosphorylated nucleic acid precursors. The chain is Thymidine kinase from Human herpesvirus 1 (strain HFEM) (HHV-1).